We begin with the raw amino-acid sequence, 346 residues long: DNA repair protein XRCC3 (346 aa).

Residue M1 is modified to N-acetylmethionine. Residue 107 to 114 (GRSSAGKT) coordinates ATP.

The protein belongs to the RecA family. RAD51 subfamily. Interacts with RAD51C and RAD51. Part of the CX3 complex consisting of RAD51C and XRCC3; the complex has a ring-like structure arranged into a flat disk around a central channel; CX3 can interact with RAD51 in vitro. Forms a complex with FANCD2, BRCA2 and phosphorylated FANCG. Interacts with SWSAP1 and ZSWIM7; involved in homologous recombination repair. Interacts directly with PALB2 which may serve as a scaffold for a HR complex containing PALB2, BRCA2, RAD51C, RAD51 and XRCC3.

The protein localises to the nucleus. Its subcellular location is the cytoplasm. The protein resides in the perinuclear region. It is found in the mitochondrion. Its function is as follows. Involved in the homologous recombination repair (HRR) pathway of double-stranded DNA, thought to repair chromosomal fragmentation, translocations and deletions. Part of the RAD51 paralog protein complex CX3 which acts in the BRCA1-BRCA2-dependent HR pathway. Upon DNA damage, CX3 acts downstream of RAD51 recruitment; the complex binds predominantly to the intersection of the four duplex arms of the Holliday junction (HJ) and to junctions of replication forks. Involved in HJ resolution and thus in processing HR intermediates late in the DNA repair process; the function may be linked to the CX3 complex and seems to involve GEN1 during mitotic cell cycle progression. Part of a PALB2-scaffolded HR complex containing BRCA2 and RAD51C and which is thought to play a role in DNA repair by HR. Plays a role in regulating mitochondrial DNA copy number under conditions of oxidative stress in the presence of RAD51 and RAD51C. The protein is DNA repair protein XRCC3 (XRCC3) of Homo sapiens (Human).